A 366-amino-acid polypeptide reads, in one-letter code: tRNA/tmRNA (uracil-C(5))-methyltransferase (366 aa).

S-adenosyl-L-methionine-binding residues include Gln-189, Tyr-217, Asn-222, Glu-238, and Asp-298. Cys-323 serves as the catalytic Nucleophile. Glu-357 functions as the Proton acceptor in the catalytic mechanism.

This sequence belongs to the class I-like SAM-binding methyltransferase superfamily. RNA M5U methyltransferase family. TrmA subfamily.

The enzyme catalyses uridine(54) in tRNA + S-adenosyl-L-methionine = 5-methyluridine(54) in tRNA + S-adenosyl-L-homocysteine + H(+). It catalyses the reaction uridine(341) in tmRNA + S-adenosyl-L-methionine = 5-methyluridine(341) in tmRNA + S-adenosyl-L-homocysteine + H(+). Its function is as follows. Dual-specificity methyltransferase that catalyzes the formation of 5-methyluridine at position 54 (m5U54) in all tRNAs, and that of position 341 (m5U341) in tmRNA (transfer-mRNA). The protein is tRNA/tmRNA (uracil-C(5))-methyltransferase of Idiomarina loihiensis (strain ATCC BAA-735 / DSM 15497 / L2-TR).